A 363-amino-acid polypeptide reads, in one-letter code: DNA replication and repair protein RecF (363 aa).

33-40 (GDNGQGKT) provides a ligand contact to ATP.

It belongs to the RecF family.

It is found in the cytoplasm. Functionally, the RecF protein is involved in DNA metabolism; it is required for DNA replication and normal SOS inducibility. RecF binds preferentially to single-stranded, linear DNA. It also seems to bind ATP. This Tropheryma whipplei (strain TW08/27) (Whipple's bacillus) protein is DNA replication and repair protein RecF.